A 162-amino-acid polypeptide reads, in one-letter code: tRNA (cytidine(34)-2'-O)-methyltransferase (162 aa).

Residues Leu-80, Gly-102, Leu-124, and Ser-132 each contribute to the S-adenosyl-L-methionine site.

This sequence belongs to the class IV-like SAM-binding methyltransferase superfamily. RNA methyltransferase TrmH family. TrmL subfamily. In terms of assembly, homodimer.

It is found in the cytoplasm. It carries out the reaction cytidine(34) in tRNA + S-adenosyl-L-methionine = 2'-O-methylcytidine(34) in tRNA + S-adenosyl-L-homocysteine + H(+). The enzyme catalyses 5-carboxymethylaminomethyluridine(34) in tRNA(Leu) + S-adenosyl-L-methionine = 5-carboxymethylaminomethyl-2'-O-methyluridine(34) in tRNA(Leu) + S-adenosyl-L-homocysteine + H(+). Its function is as follows. Methylates the ribose at the nucleotide 34 wobble position in the two leucyl isoacceptors tRNA(Leu)(CmAA) and tRNA(Leu)(cmnm5UmAA). Catalyzes the methyl transfer from S-adenosyl-L-methionine to the 2'-OH of the wobble nucleotide. This Acidovorax sp. (strain JS42) protein is tRNA (cytidine(34)-2'-O)-methyltransferase.